A 241-amino-acid chain; its full sequence is Demethylmenaquinone methyltransferase (241 aa).

S-adenosyl-L-methionine contacts are provided by residues Thr-60, Asp-81, and 106 to 107; that span reads DA.

The protein belongs to the class I-like SAM-binding methyltransferase superfamily. MenG/UbiE family.

The catalysed reaction is a 2-demethylmenaquinol + S-adenosyl-L-methionine = a menaquinol + S-adenosyl-L-homocysteine + H(+). It functions in the pathway quinol/quinone metabolism; menaquinone biosynthesis; menaquinol from 1,4-dihydroxy-2-naphthoate: step 2/2. Its function is as follows. Methyltransferase required for the conversion of demethylmenaquinol (DMKH2) to menaquinol (MKH2). This is Demethylmenaquinone methyltransferase from Staphylococcus aureus (strain Mu3 / ATCC 700698).